A 202-amino-acid polypeptide reads, in one-letter code: Na(+)-translocating NADH-quinone reductase subunit E (202 aa).

The next 6 helical transmembrane spans lie at 11–31 (SVFI…FLAV), 35–55 (VTTA…SVPA), 79–99 (LSFL…QILE), 114–134 (GIFL…AFMV), 144–164 (LVFG…LAAV), and 180–200 (LGIT…FSGV).

The protein belongs to the NqrDE/RnfAE family. In terms of assembly, composed of six subunits; NqrA, NqrB, NqrC, NqrD, NqrE and NqrF.

It localises to the cell inner membrane. The enzyme catalyses a ubiquinone + n Na(+)(in) + NADH + H(+) = a ubiquinol + n Na(+)(out) + NAD(+). NQR complex catalyzes the reduction of ubiquinone-1 to ubiquinol by two successive reactions, coupled with the transport of Na(+) ions from the cytoplasm to the periplasm. NqrA to NqrE are probably involved in the second step, the conversion of ubisemiquinone to ubiquinol. This Shewanella denitrificans (strain OS217 / ATCC BAA-1090 / DSM 15013) protein is Na(+)-translocating NADH-quinone reductase subunit E.